A 206-amino-acid polypeptide reads, in one-letter code: Stage III sporulation protein AF (206 aa).

The next 2 membrane-spanning stretches (helical) occupy residues 1–21 (MSFL…AIVI) and 34–54 (AKMV…FKLF).

The protein resides in the cell membrane. The chain is Stage III sporulation protein AF (spoIIIAF) from Bacillus subtilis (strain 168).